The chain runs to 186 residues: Protein MTH_152 (186 aa).

It belongs to the flavoredoxin family. Homodimer. It depends on FMN as a cofactor.

This Methanothermobacter thermautotrophicus (strain ATCC 29096 / DSM 1053 / JCM 10044 / NBRC 100330 / Delta H) (Methanobacterium thermoautotrophicum) protein is Protein MTH_152.